The following is a 224-amino-acid chain: Adenylate kinase (224 aa).

Residue 10–15 coordinates ATP; the sequence is GSGKST. The interval 30 to 59 is NMP; that stretch reads SSGDLIRGEIERKSSLGLEMAAYLSRGDLI. AMP contacts are provided by residues Ser31, Arg36, 57–59, 83–86, and Gln90; these read DLI and GYPR. Residues 124-161 form an LID region; that stretch reads GRRICPNCGAVYHITYNPPKVPGICDVCGTKLIQRTDD. Position 125 (Arg125) interacts with ATP. Cys128 and Cys131 together coordinate Zn(2+). 134 to 135 contributes to the ATP binding site; that stretch reads VY. Residues Cys148 and Cys151 each contribute to the Zn(2+) site. Arg158 and Arg169 together coordinate AMP. Gly197 contributes to the ATP binding site.

It belongs to the adenylate kinase family. Monomer.

The protein resides in the cytoplasm. It catalyses the reaction AMP + ATP = 2 ADP. It functions in the pathway purine metabolism; AMP biosynthesis via salvage pathway; AMP from ADP: step 1/1. Functionally, catalyzes the reversible transfer of the terminal phosphate group between ATP and AMP. Plays an important role in cellular energy homeostasis and in adenine nucleotide metabolism. The chain is Adenylate kinase from Thermococcus gammatolerans (strain DSM 15229 / JCM 11827 / EJ3).